A 354-amino-acid chain; its full sequence is MRVADFTFELPDSLIARHPLAERRSSRLLTLDGPTGALAHRQFTDLLEHLRPGDLMVFNNTRVIPARLFGQKASGGKLEILVERVLDSHRVLAHVRSSKSPKPGSSILIDGGGEAEMVARHHALFELRFAEEVLPLLERVGHMPLPPYIDRPDEGADRERYQTVYAQRAGAVAAPTAGLHFDQPLLEAIAAKGVETAFVTLHVGAGTFQPVRVEQIEDHHMHSEWLEVGQDVVDAVAACRARGGRVIAVGTTSVRSLESAARDGELKSFSGDTDIFIYPGRPFHVVDALVTNFHLPESTLLMLVSAFAGYPETMAAYAGAIEHGYRFFSYGDAMFITRNPAPTAPQESAPEDHA.

This sequence belongs to the QueA family. In terms of assembly, monomer.

The protein localises to the cytoplasm. The catalysed reaction is 7-aminomethyl-7-carbaguanosine(34) in tRNA + S-adenosyl-L-methionine = epoxyqueuosine(34) in tRNA + adenine + L-methionine + 2 H(+). It participates in tRNA modification; tRNA-queuosine biosynthesis. In terms of biological role, transfers and isomerizes the ribose moiety from AdoMet to the 7-aminomethyl group of 7-deazaguanine (preQ1-tRNA) to give epoxyqueuosine (oQ-tRNA). This Pseudomonas savastanoi pv. phaseolicola (strain 1448A / Race 6) (Pseudomonas syringae pv. phaseolicola (strain 1448A / Race 6)) protein is S-adenosylmethionine:tRNA ribosyltransferase-isomerase.